Consider the following 217-residue polypeptide: Octanoyltransferase (217 aa).

The BPL/LPL catalytic domain maps to 34 to 216 (SETRDELWLL…AASRASRHDR (183 aa)). Residues 73 to 80 (RGGQVTWH), 140 to 142 (ALG), and 153 to 155 (GLS) each bind substrate. Cys-171 (acyl-thioester intermediate) is an active-site residue.

It belongs to the LipB family.

Its subcellular location is the cytoplasm. It catalyses the reaction octanoyl-[ACP] + L-lysyl-[protein] = N(6)-octanoyl-L-lysyl-[protein] + holo-[ACP] + H(+). Its pathway is protein modification; protein lipoylation via endogenous pathway; protein N(6)-(lipoyl)lysine from octanoyl-[acyl-carrier-protein]: step 1/2. Its function is as follows. Catalyzes the transfer of endogenously produced octanoic acid from octanoyl-acyl-carrier-protein onto the lipoyl domains of lipoate-dependent enzymes. Lipoyl-ACP can also act as a substrate although octanoyl-ACP is likely to be the physiological substrate. The polypeptide is Octanoyltransferase (Halorhodospira halophila (strain DSM 244 / SL1) (Ectothiorhodospira halophila (strain DSM 244 / SL1))).